A 129-amino-acid chain; its full sequence is Small ribosomal subunit protein eS6 (129 aa).

The protein belongs to the eukaryotic ribosomal protein eS6 family.

The polypeptide is Small ribosomal subunit protein eS6 (Methanocorpusculum labreanum (strain ATCC 43576 / DSM 4855 / Z)).